A 784-amino-acid polypeptide reads, in one-letter code: Toll-like receptor 2 (784 aa).

An N-terminal signal peptide occupies residues 1–20 (MPHTLWMVWVLGVIISLSKE). Residues 21-588 (ESSNQASLSC…RLSVSECHRT (568 aa)) lie on the Extracellular side of the membrane. Cysteines 30 and 36 form a disulfide. LRR repeat units follow at residues 54–77 (VKSLDLSNNRITYISNSDLQRCVN), 78–101 (LQALVLTSNGINTIEEDSFSSLGS), 102–125 (LEHLDLSYNYLSNLSSSWFKPLSS), 126–150 (LTFLNLLGNPYKTLGETSLFSHLTK), 151–175 (LQILRVGNMDTFTKIQRKDFAGLTF), 176–199 (LEELEIDASDLQSYEPKSLKSIQN), 200–223 (VSHLILHMKQHILLLEIFVDVTSS), 224–250 (VECLELRDTDLDTFHFSELSTGETNSL), 251–278 (IKKFTFRNVKITDESLFQVMKLLNQISG), 279–308 (LLELEFDDCTLNGVGNFRASDNDRVIDPGK), 309–337 (VETLTIRRLHIPRFYLFYDLSTLYSLTER), 338–361 (VKRITVENSKVFLVPCLLSQHLKS), 362–388 (LEYLDLSENLMVEEYLKNSACEDAWPS), 389–414 (LQTLILRQNHLASLEKTGETLLTLKN), 415–437 (LTNIDISKNSFHSMPETCQWPEK), 438–457 (MKYLNLSSTRIHSVTGCIPK), 458–478 (TLEILDVSNNNLNLFSLNLPQ), 479–500 (LKELYISRNKLMTLPDASLLPM), and 501–524 (LLVLKISRNAITTFSKEQLDSFHT). An N-linked (GlcNAc...) asparagine glycan is attached at asparagine 114. N-linked (GlcNAc...) asparagine glycosylation occurs at asparagine 199. A disulfide bond links cysteine 353 and cysteine 382. Asparagine 414 carries N-linked (GlcNAc...) asparagine glycosylation. Cysteine 432 and cysteine 454 form a disulfide bridge. N-linked (GlcNAc...) asparagine glycosylation is present at asparagine 442. Positions 525-579 (LKTLEAGGNNFICSCEFLSFTQEQQALAKVLIDWPANYLCDSPSHVRGQQVQDVR) constitute an LRRCT domain. The helical transmembrane segment at 589-609 (ALVSGMCCALFLLILLTGVLC) threads the bilayer. Residues 610 to 784 (HRFHGLWYMK…WVNLRAAIKS (175 aa)) lie on the Cytoplasmic side of the membrane. The region spanning 639–782 (ICYDAFVSYS…GFWVNLRAAI (144 aa)) is the TIR domain. Lysine 754 is covalently cross-linked (Glycyl lysine isopeptide (Lys-Gly) (interchain with G-Cter in ubiquitin)). The short motif at 761-778 (YLEWPMDEAQREGFWVNL) is the ATG16L1-binding motif element.

This sequence belongs to the Toll-like receptor family. In terms of assembly, interacts with LY96, TLR1 and TLR6 (via extracellular domain). TLR2 seems to exist in heterodimers with either TLR1 or TLR6 before stimulation by the ligand. The heterodimers form bigger oligomers in response to their corresponding ligands as well as further heterotypic associations with other receptors such as CD14 and/or CD36. Binds MYD88 (via TIR domain). Interacts with TICAM1. Interacts with CNPY3. Interacts with ATG16L1. Interacts with PPP1R11. Interacts with TICAM2. Interacts with TIRAP. As to quaternary structure, (Microbial infection) Interacts with M.tuberculosis EsxA. (Microbial infection) Interacts with M.bovis MPB83. In terms of assembly, (Microbial infection) Interacts with Staphylococcus aureus protein SSL5. Glycosylation of Asn-442 is critical for secretion of the N-terminal ectodomain of TLR2. In terms of processing, ubiquitinated at Lys-754 by PPP1R11, leading to its degradation. Deubiquitinated by USP2. Highly expressed in peripheral blood leukocytes, in particular in monocytes, in bone marrow, lymph node and in spleen. Also detected in lung and in fetal liver. Levels are low in other tissues.

The protein resides in the membrane. Its subcellular location is the cytoplasmic vesicle. The protein localises to the phagosome membrane. It localises to the membrane raft. Its function is as follows. Cooperates with LY96 to mediate the innate immune response to bacterial lipoproteins and other microbial cell wall components. Cooperates with TLR1 or TLR6 to mediate the innate immune response to bacterial lipoproteins or lipopeptides. Acts via MYD88 and TRAF6, leading to NF-kappa-B activation, cytokine secretion and the inflammatory response. May also activate immune cells and promote apoptosis in response to the lipid moiety of lipoproteins. Recognizes mycoplasmal macrophage-activating lipopeptide-2kD (MALP-2), soluble tuberculosis factor (STF), phenol-soluble modulin (PSM) and B.burgdorferi outer surface protein A lipoprotein (OspA-L) cooperatively with TLR6. Stimulation of monocytes in vitro with M.tuberculosis PstS1 induces p38 MAPK and ERK1/2 activation primarily via this receptor, but also partially via TLR4. MAPK activation in response to bacterial peptidoglycan also occurs via this receptor. Acts as a receptor for M.tuberculosis lipoproteins LprA, LprG, LpqH and PstS1, some lipoproteins are dependent on other coreceptors (TLR1, CD14 and/or CD36); the lipoproteins act as agonists to modulate antigen presenting cell functions in response to the pathogen. M.tuberculosis HSP70 (dnaK) but not HSP65 (groEL-2) acts via this protein to stimulate NF-kappa-B expression. Recognizes M.tuberculosis major T-antigen EsxA (ESAT-6) which inhibits downstream MYD88-dependent signaling (shown in mouse). Forms activation clusters composed of several receptors depending on the ligand, these clusters trigger signaling from the cell surface and subsequently are targeted to the Golgi in a lipid-raft dependent pathway. Forms the cluster TLR2:TLR6:CD14:CD36 in response to diacylated lipopeptides and TLR2:TLR1:CD14 in response to triacylated lipopeptides. Required for normal uptake of M.tuberculosis, a process that is inhibited by M.tuberculosis LppM. The protein is Toll-like receptor 2 of Homo sapiens (Human).